A 464-amino-acid polypeptide reads, in one-letter code: Cysteine--tRNA ligase (464 aa).

Residue Cys-29 coordinates Zn(2+). The 'HIGH' region motif lies at 31–41 (ATVQGVPHIGH). The interval 160–180 (RLDEVQQGESTASGKRDPRDF) is disordered. Zn(2+) contacts are provided by Cys-208, His-233, and Glu-237. The short motif at 264 to 268 (KMSKS) is the 'KMSKS' region element. Lys-267 lines the ATP pocket.

This sequence belongs to the class-I aminoacyl-tRNA synthetase family. As to quaternary structure, monomer. The cofactor is Zn(2+).

It localises to the cytoplasm. It carries out the reaction tRNA(Cys) + L-cysteine + ATP = L-cysteinyl-tRNA(Cys) + AMP + diphosphate. In Saccharopolyspora erythraea (strain ATCC 11635 / DSM 40517 / JCM 4748 / NBRC 13426 / NCIMB 8594 / NRRL 2338), this protein is Cysteine--tRNA ligase.